The primary structure comprises 465 residues: Ribulose bisphosphate carboxylase large chain (465 aa).

Lysine 4 bears the N6,N6,N6-trimethyllysine mark. The substrate site is built by asparagine 113 and threonine 163. Lysine 165 acts as the Proton acceptor in catalysis. Lysine 167 is a substrate binding site. Mg(2+) contacts are provided by lysine 191, aspartate 193, and glutamate 194. Lysine 191 is subject to N6-carboxylysine. Catalysis depends on histidine 284, which acts as the Proton acceptor. Substrate is bound by residues arginine 285, histidine 317, and serine 369.

This sequence belongs to the RuBisCO large chain family. Type I subfamily. Heterohexadecamer of 8 large chains and 8 small chains; disulfide-linked. The disulfide link is formed within the large subunit homodimers. The cofactor is Mg(2+). Post-translationally, the disulfide bond which can form in the large chain dimeric partners within the hexadecamer appears to be associated with oxidative stress and protein turnover.

Its subcellular location is the plastid. It is found in the chloroplast. The catalysed reaction is 2 (2R)-3-phosphoglycerate + 2 H(+) = D-ribulose 1,5-bisphosphate + CO2 + H2O. It catalyses the reaction D-ribulose 1,5-bisphosphate + O2 = 2-phosphoglycolate + (2R)-3-phosphoglycerate + 2 H(+). RuBisCO catalyzes two reactions: the carboxylation of D-ribulose 1,5-bisphosphate, the primary event in carbon dioxide fixation, as well as the oxidative fragmentation of the pentose substrate in the photorespiration process. Both reactions occur simultaneously and in competition at the same active site. This Idesia polycarpa (Iigiri tree) protein is Ribulose bisphosphate carboxylase large chain.